The primary structure comprises 327 residues: ATP-dependent 6-phosphofructokinase (327 aa).

Position 12 (G12) interacts with ATP. ADP contacts are provided by residues 22–26 (RGVVR) and 55–60 (RYSVSD). ATP is bound by residues 73–74 (RF) and 103–106 (GDGS). D104 serves as a coordination point for Mg(2+). 127 to 129 (TID) contributes to the substrate binding site. D129 serves as the catalytic Proton acceptor. Residue R156 coordinates ADP. Substrate-binding positions include R164 and 171-173 (MGR). ADP is bound by residues 187–189 (GCE), K213, and 215–217 (KKH). Substrate-binding positions include E224, R245, and 251-254 (HIQR).

The protein belongs to the phosphofructokinase type A (PFKA) family. ATP-dependent PFK group I subfamily. Prokaryotic clade 'B1' sub-subfamily. Homotetramer. It depends on Mg(2+) as a cofactor.

It localises to the cytoplasm. The enzyme catalyses beta-D-fructose 6-phosphate + ATP = beta-D-fructose 1,6-bisphosphate + ADP + H(+). It participates in carbohydrate degradation; glycolysis; D-glyceraldehyde 3-phosphate and glycerone phosphate from D-glucose: step 3/4. Allosterically activated by ADP and other diphosphonucleosides, and allosterically inhibited by phosphoenolpyruvate. In terms of biological role, catalyzes the phosphorylation of D-fructose 6-phosphate to fructose 1,6-bisphosphate by ATP, the first committing step of glycolysis. The polypeptide is ATP-dependent 6-phosphofructokinase (Yersinia pseudotuberculosis serotype O:1b (strain IP 31758)).